Reading from the N-terminus, the 479-residue chain is Glutamate--tRNA ligase (479 aa).

A 'HIGH' region motif is present at residues 9–19 (PSPTGNLHIGT). The short motif at 243–247 (KLSKR) is the 'KMSKS' region element. Lysine 246 provides a ligand contact to ATP.

Belongs to the class-I aminoacyl-tRNA synthetase family. Glutamate--tRNA ligase type 1 subfamily. As to quaternary structure, monomer.

The protein localises to the cytoplasm. It catalyses the reaction tRNA(Glu) + L-glutamate + ATP = L-glutamyl-tRNA(Glu) + AMP + diphosphate. In terms of biological role, catalyzes the attachment of glutamate to tRNA(Glu) in a two-step reaction: glutamate is first activated by ATP to form Glu-AMP and then transferred to the acceptor end of tRNA(Glu). This Synechococcus sp. (strain JA-2-3B'a(2-13)) (Cyanobacteria bacterium Yellowstone B-Prime) protein is Glutamate--tRNA ligase.